The primary structure comprises 279 residues: Ethanolamine utilization protein EutJ (279 aa).

This sequence belongs to the EutJ family.

The protein operates within amine and polyamine degradation; ethanolamine degradation. In terms of biological role, may protect ethanolamine ammonia-lyase (EAL, eutB-eutC) from inhibition, may function in assembling the bacterial microcompartment and/or in refolding EAL, suggesting it may have chaperone activity. Overexpression of eutJ and eutS in E.coli leads to multiple BMC-like structures; eutS expression alone leads to 1 BMC-like structure per cell. Expression of the eut operon allows this bacteria to use ethanolamine (EA) as a carbon, nitrogen and energy source. It relies on cobalamin (vitamin B12) both as a cofactor for the ethanolamine ammonia-lyase (EAL) activity and to induce the operon. EA enhances bacterial survival in macrophages in a concentration-dependent manner, suggesting it is an important nutrient during infection. The protein is Ethanolamine utilization protein EutJ of Salmonella typhimurium (strain LT2 / SGSC1412 / ATCC 700720).